Consider the following 565-residue polypeptide: Dihydroxy-acid dehydratase (565 aa).

A Mg(2+)-binding site is contributed by Asp80. Residue Cys121 coordinates [2Fe-2S] cluster. Residues Asp122 and Lys123 each coordinate Mg(2+). An N6-carboxylysine modification is found at Lys123. [2Fe-2S] cluster is bound at residue Cys194. Position 447 (Glu447) interacts with Mg(2+). The active-site Proton acceptor is the Ser473.

Belongs to the IlvD/Edd family. In terms of assembly, homodimer. [2Fe-2S] cluster is required as a cofactor. It depends on Mg(2+) as a cofactor.

The enzyme catalyses (2R)-2,3-dihydroxy-3-methylbutanoate = 3-methyl-2-oxobutanoate + H2O. The catalysed reaction is (2R,3R)-2,3-dihydroxy-3-methylpentanoate = (S)-3-methyl-2-oxopentanoate + H2O. Its pathway is amino-acid biosynthesis; L-isoleucine biosynthesis; L-isoleucine from 2-oxobutanoate: step 3/4. The protein operates within amino-acid biosynthesis; L-valine biosynthesis; L-valine from pyruvate: step 3/4. Functionally, functions in the biosynthesis of branched-chain amino acids. Catalyzes the dehydration of (2R,3R)-2,3-dihydroxy-3-methylpentanoate (2,3-dihydroxy-3-methylvalerate) into 2-oxo-3-methylpentanoate (2-oxo-3-methylvalerate) and of (2R)-2,3-dihydroxy-3-methylbutanoate (2,3-dihydroxyisovalerate) into 2-oxo-3-methylbutanoate (2-oxoisovalerate), the penultimate precursor to L-isoleucine and L-valine, respectively. This chain is Dihydroxy-acid dehydratase, found in Chlorobium luteolum (strain DSM 273 / BCRC 81028 / 2530) (Pelodictyon luteolum).